The chain runs to 423 residues: Serine incorporator 5 (423 aa).

The Extracellular segment spans residues 1–36 (MSAQCCAGQLACCCGSAGCSLCCDCCPRIRQSLSTR). Residues 37 to 57 (FMYALYFILVVVLCCIMMSTT) traverse the membrane as a helical segment. Residues 58-89 (VAHKMKEHIPFFEDMCKGIKAGDTCEKLVGYS) are Cytoplasmic-facing. The chain crosses the membrane as a helical span at residues 90 to 110 (AVYRVCFGMACFFFIFCLLTL). Over 111-124 (KINNSKSCRAHIHN) the chain is Extracellular. N-linked (GlcNAc...) asparagine glycosylation occurs at N113. Residues 125–145 (GFWFFKLLLLGAMCSGAFFIP) traverse the membrane as a helical segment. At 146–156 (DQDTFLNAWRY) the chain is on the cytoplasmic side. Residues 157–177 (VGAVGGFLFIGIQLLLLVEFA) form a helical membrane-spanning segment. The Extracellular portion of the chain corresponds to 178–198 (HKWNKNWTAGTASNKLWYASL). A glycan (N-linked (GlcNAc...) asparagine) is linked at N183. Residues 199–219 (ALVTLIMYSIATGGLVLMAVF) form a helical membrane-spanning segment. Residues 220 to 230 (YTQKDSCMENK) are Cytoplasmic-facing. A helical membrane pass occupies residues 231–251 (ILLGVNGGLCLLISLVAISPW). At 252 to 258 (VQNRQPH) the chain is on the extracellular side. Residues 259-279 (SGLLQSGVISCYVTYLTFSAL) form a helical membrane-spanning segment. Over 280 to 311 (SSKPAEVVLDEHGKNVTICVPDFGQDLYRDEN) the chain is Cytoplasmic. A helical membrane pass occupies residues 312-332 (LVTILGTSLLIGCILYSCLTS). Residues 333–385 (TTRSSSDALQGRYAAPELEIARCCFCFSPGGEDTEEQQPGKEGPRVIYDEKKG) are Extracellular-facing. The helical transmembrane segment at 386 to 406 (TVYIYSYFHFVFFLASLYVMM) threads the bilayer. The Cytoplasmic portion of the chain corresponds to 407–423 (TVTNWFNHVRSAFHLLP).

This sequence belongs to the TDE1 family. In terms of tissue distribution, highly expressed in placenta, skeletal muscle, spleen, thymus, testis and peripheral leukocyte and is expressed weakly in the heart, liver and fetal brain.

It localises to the cell membrane. The protein localises to the cytoplasm. The protein resides in the perinuclear region. It catalyses the reaction a 1,2-diacyl-sn-glycero-3-phospho-L-serine(in) = a 1,2-diacyl-sn-glycero-3-phospho-L-serine(out). It carries out the reaction a 1,2-diacyl-sn-glycero-3-phosphocholine(in) = a 1,2-diacyl-sn-glycero-3-phosphocholine(out). The catalysed reaction is a 1,2-diacyl-sn-glycero-3-phosphoethanolamine(in) = a 1,2-diacyl-sn-glycero-3-phosphoethanolamine(out). Restriction factor required to restrict infectivity of lentiviruses, such as HIV-1: acts by inhibiting an early step of viral infection. Impairs the penetration of the viral particle into the cytoplasm. Non-ATP-dependent, non-specific lipid transporter for phosphatidylserine, phosphatidylcholine, and phosphatidylethanolamine. Functions as a scramblase that flips lipids in both directions across the membrane. Phospholipid scrambling results in HIV-1 surface exposure of phosphatidylserine and loss of membrane asymmetry, which leads to changes in HIV-1 Env conformation and loss of infectivity. Enhances the incorporation of serine into phosphatidylserine and sphingolipids. May play a role in providing serine molecules for the formation of myelin glycosphingolipids in oligodendrocytes. The sequence is that of Serine incorporator 5 from Homo sapiens (Human).